The primary structure comprises 314 residues: Malate dehydrogenase (314 aa).

Residues 7 to 13 (GAAGGIG) and aspartate 34 each bind NAD(+). Residues arginine 81 and arginine 87 each contribute to the substrate site. NAD(+) is bound by residues asparagine 94 and 117 to 119 (ITN). Substrate-binding residues include asparagine 119 and arginine 153. The active-site Proton acceptor is histidine 177. An NAD(+)-binding site is contributed by methionine 230.

The protein belongs to the LDH/MDH superfamily. MDH type 1 family. As to quaternary structure, homodimer.

It catalyses the reaction (S)-malate + NAD(+) = oxaloacetate + NADH + H(+). Its function is as follows. Catalyzes the reversible oxidation of malate to oxaloacetate. This is Malate dehydrogenase from Glaesserella parasuis serovar 5 (strain SH0165) (Haemophilus parasuis).